We begin with the raw amino-acid sequence, 122 residues long: Small ribosomal subunit protein uS13 (122 aa).

The segment at leucine 94 to lysine 122 is disordered. A compositionally biased stretch (basic residues) spans glutamine 101–lysine 122.

This sequence belongs to the universal ribosomal protein uS13 family. In terms of assembly, part of the 30S ribosomal subunit. Forms a loose heterodimer with protein S19. Forms two bridges to the 50S subunit in the 70S ribosome.

Functionally, located at the top of the head of the 30S subunit, it contacts several helices of the 16S rRNA. In the 70S ribosome it contacts the 23S rRNA (bridge B1a) and protein L5 of the 50S subunit (bridge B1b), connecting the 2 subunits; these bridges are implicated in subunit movement. Contacts the tRNAs in the A and P-sites. The sequence is that of Small ribosomal subunit protein uS13 from Chlamydia trachomatis serovar A (strain ATCC VR-571B / DSM 19440 / HAR-13).